The sequence spans 135 residues: U-myrmeciitoxin(01)-Mg7a (135 aa).

Residues 1–21 form the signal peptide; sequence MKLSCLSLALAIILLLAIVHS. The propeptide occupies 22 to 72; the sequence is PNMEVKALAGPEADAIGFADAFGEADAFGEADAFGEADAFGEADAFGEADA. The segment at 69 to 95 is disordered; that stretch reads EADAKRSKSSSKTKPKKPKKPKKKIKI. Over residues 75–93 the composition is skewed to basic residues; the sequence is SKSSSKTKPKKPKKPKKKI. O-linked (GalNAc...) serine glycosylation occurs at Ser120. O-linked (GalNAc...) threonine glycosylation is found at Thr129 and Thr130.

Belongs to the formicidae venom precursor-01 superfamily. In terms of processing, glycosylation is critical to maintaining the aqueous solubility of this protein, but does not directly contribute to its activity. As to expression, expressed by the venom gland.

It is found in the secreted. Its subcellular location is the target cell membrane. Functionally, neurotoxin that triggers pain behavior and inflammation in mammals, and is paralytic and lethal to insects. Causes a time-dependent increase in cell leak current. May act by targeting membranes. The protein is U-myrmeciitoxin(01)-Mg7a of Myrmecia gulosa (Red bulldog ant).